A 574-amino-acid chain; its full sequence is Envelope glycoprotein (574 aa).

The N-terminal stretch at 1–22 (MTLKDIPFWRVLLIFQTARVYA) is a signal peptide. Residues 23-514 (GFGDPREAIT…TGLHGLLPYL (492 aa)) are Extracellular-facing. N-linked (GlcNAc...) asparagine; by host glycosylation is found at Asn117 and Asn233. Residues 243–246 (CWLC) carry the CXXC motif. 3 disulfides stabilise this stretch: Cys243/Cys246, Cys243/Cys471, and Cys463/Cys470. N-linked (GlcNAc...) asparagine; by host glycans are attached at residues Asn260, Asn267, Asn288, Asn298, Asn312, Asn318, Asn327, and Asn345. The interval 386 to 406 (FIPLLVGLGITTAVSTGTAGL) is fusion peptide. Coiled-coil stretches lie at residues 407–457 (GYSI…LLTA) and 467–503 (QEKC…DNPF). The segment at 446–462 (LQNRRGLDLLTAEQGGI) is immunosuppression. Residues 463-471 (CLALQEKCC) carry the CX6CC motif. An N-linked (GlcNAc...) asparagine; by host glycan is attached at Asn475. A helical transmembrane segment spans residues 515 to 535 (LPLLGPLFCLLLLITFGPLIF). Over 536 to 574 (NKIITFVKQQIDAIQAKPIQVHYHRLEQEDNGGVYLRVS) the chain is Cytoplasmic. Residues 558 to 561 (YHRL) carry the YXXL motif; contains endocytosis signal motif.

As to quaternary structure, the mature envelope protein (Env) consists of a trimer of SU-TM heterodimers attached by a labile interchain disulfide bond. Post-translationally, specific enzymatic cleavages in vivo yield mature proteins. Envelope glycoproteins are synthesized as an inactive precursor that is N-glycosylated and processed likely by host cell furin or by a furin-like protease in the Golgi to yield the mature SU and TM proteins. The cleavage site between SU and TM requires the minimal sequence [KR]-X-[KR]-R. The R-peptide is released from the C-terminus of the cytoplasmic tail of the TM protein upon particle formation as a result of proteolytic cleavage by the viral protease. Cleavage of this peptide is required for TM to become fusogenic. In terms of processing, the CXXC motif is highly conserved across a broad range of retroviral envelope proteins. It is thought to participate in the formation of a labile disulfide bond possibly with the CX6CC motif present in the transmembrane protein. Isomerization of the intersubunit disulfide bond to an SU intrachain disulfide bond is thought to occur upon receptor recognition in order to allow membrane fusion.

The protein localises to the virion membrane. Its subcellular location is the host cell membrane. Its function is as follows. The surface protein (SU) attaches the virus to the host cell by binding to its receptor. This interaction triggers the refolding of the transmembrane protein (TM) and is thought to activate its fusogenic potential by unmasking its fusion peptide. Fusion occurs at the host cell plasma membrane. In terms of biological role, the transmembrane protein (TM) acts as a class I viral fusion protein. Under the current model, the protein has at least 3 conformational states: pre-fusion native state, pre-hairpin intermediate state, and post-fusion hairpin state. During viral and target cell membrane fusion, the coiled coil regions (heptad repeats) assume a trimer-of-hairpins structure, positioning the fusion peptide in close proximity to the C-terminal region of the ectodomain. The formation of this structure appears to drive apposition and subsequent fusion of viral and target cell membranes. Membranes fusion leads to delivery of the nucleocapsid into the cytoplasm. This is Envelope glycoprotein (env) from Macaca mulatta (Rhesus macaque).